Here is a 177-residue protein sequence, read N- to C-terminus: Co-chaperone protein HscB homolog (177 aa).

The region spanning 8-80 is the J domain; the sequence is DYFSLFGMPR…LSRAQYLLEL (73 aa).

Belongs to the HscB family. Interacts with HscA and stimulates its ATPase activity.

In terms of biological role, co-chaperone involved in the maturation of iron-sulfur cluster-containing proteins. Seems to help targeting proteins to be folded toward HscA. In Azoarcus sp. (strain BH72), this protein is Co-chaperone protein HscB homolog.